The chain runs to 131 residues: L-ectoine synthase (131 aa).

It belongs to the ectoine synthase family.

The catalysed reaction is (2S)-4-acetamido-2-aminobutanoate = L-ectoine + H2O. It participates in amine and polyamine biosynthesis; ectoine biosynthesis; L-ectoine from L-aspartate 4-semialdehyde: step 3/3. Its function is as follows. Catalyzes the circularization of gamma-N-acetyl-alpha,gamma-diaminobutyric acid (ADABA) to ectoine (1,4,5,6-tetrahydro-2-methyl-4-pyrimidine carboxylic acid), which is an excellent osmoprotectant. The polypeptide is L-ectoine synthase (Bordetella bronchiseptica (strain ATCC BAA-588 / NCTC 13252 / RB50) (Alcaligenes bronchisepticus)).